We begin with the raw amino-acid sequence, 892 residues long: Smad protein daf-3 (892 aa).

Disordered stretches follow at residues 1-43 (MGDH…GLED) and 135-161 (PYLDPDSQDDDPEDGVNYPDPDLFDTK). A compositionally biased stretch (polar residues) spans 15-26 (IPPQFNYSQPGT). An MH1 domain is found at 198-347 (KIVEYLMYYR…YEIVIGTMIV (150 aa)). Positions 505-552 (YPDFHHPFNQQPHQPPQLSQNHTSQQGSHQPGHQGQVPNDPPISRPVL) are disordered. Low complexity predominate over residues 528–540 (SQQGSHQPGHQGQ). One can recognise an MH2 domain in the interval 657–880 (WGTIVYYEKN…TNCFEPLGME (224 aa)).

This sequence belongs to the dwarfin/SMAD family. Interacts with R-SMADs daf-8 and daf-14. Interacts with daf-14 in a daf-8 dependent manner. May interact with daf-5.

Its subcellular location is the cytoplasm. It is found in the nucleus. The protein resides in the chromosome. In terms of biological role, transcriptional regulator and common SMAD (co-SMAD), required to regulate entry into a developmentally arrested larval state known as dauer, in response to harsh environmental conditions. Probable component of transcriptional regulatory complex with SMAD protein daf-5. Acts antagonistically to SMAD signaling downstream of TGF-beta-like daf-7 signaling. Binds to the 5'-GTCTG-3' motif found in regulatory regions and may modulate the expression of genes involved in TGF-beta-like daf-7 and Notch lag-2 signaling. May regulate gene expression outside the dauer pathway. This Caenorhabditis elegans protein is Smad protein daf-3.